The primary structure comprises 801 residues: Protocadherin beta-8 (801 aa).

The signal sequence occupies residues 1–29 (MEASGKLICRQRQVLFSFLLLGLSLAGAA). The Extracellular portion of the chain corresponds to 30-691 (EPRSYSVVEE…GQADSLTVYL (662 aa)). 5 Cadherin domains span residues 36–134 (VVEE…SPVF), 139–243 (MLVK…APEF), 248–348 (YRVQ…APEV), 353–452 (FTSP…APAF), and 457–562 (YTLF…SPFV). A disulfide bridge connects residues cysteine 97 and cysteine 103. Residues asparagine 419 and asparagine 437 are each glycosylated (N-linked (GlcNAc...) asparagine). Asparagine 568 carries an N-linked (GlcNAc...) asparagine glycan. The region spanning 569 to 672 (SSAPCTELVP…LVDGFSQPYL (104 aa)) is the Cadherin 6 domain. Residues 692 to 710 (VVALASVSSLFLFSVLLFV) traverse the membrane as a helical segment. The Cytoplasmic segment spans residues 711 to 801 (AVRLCRRSRA…NGFGFSLQLK (91 aa)).

Forms homodimers in trans (molecules expressed by two different cells). Forms promiscuous heterodimers in cis (at the plasma membrane of the same cell) with other protocadherins.

It is found in the cell membrane. Functionally, calcium-dependent cell-adhesion protein involved in cells self-recognition and non-self discrimination. Thereby, it is involved in the establishment and maintenance of specific neuronal connections in the brain. The sequence is that of Protocadherin beta-8 from Pan troglodytes (Chimpanzee).